A 106-amino-acid polypeptide reads, in one-letter code: ATP-dependent Clp protease adapter protein ClpS (106 aa).

Belongs to the ClpS family. Binds to the N-terminal domain of the chaperone ClpA.

Functionally, involved in the modulation of the specificity of the ClpAP-mediated ATP-dependent protein degradation. The polypeptide is ATP-dependent Clp protease adapter protein ClpS (Photobacterium profundum (strain SS9)).